Reading from the N-terminus, the 572-residue chain is Protein IQ-DOMAIN 30 (572 aa).

The interval 75-96 (SDDEIQVSEVQPTDSQDVASVP) is disordered. The span at 82-92 (SEVQPTDSQDV) shows a compositional bias: polar residues. 2 consecutive IQ domains span residues 108 to 136 (QEIAAVTVQAAYRGYLARRAFKILKGIIR) and 137 to 154 (LQALIRGHMVRRQAVSTL). A calmodulin-binding region spans residues 159–178 (GIVRLQALARGREIRHSDIG). 2 disordered regions span residues 282–332 (RPKK…MDNP) and 399–572 (IQTH…EWKR). Polar residues-rich tracts occupy residues 291–305 (PSSNLDNSSVAQTSS) and 400–419 (QTHTPLGTNESLDSTLVNQI). Over residues 428 to 455 (AEEKEDVKEERTPKQNHKENSAGKENQK) the composition is skewed to basic and acidic residues. 3 stretches are compositionally biased toward polar residues: residues 459 to 493 (KASSVTATQTAEFQESGNGNQTSSPGIPSYMQATK), 502 to 514 (QGSSSPRQLGTTE), and 522 to 560 (LPSSGNSAKITSHSPKTRVSNSSGKSGNKTEKTLLSSRE).

It belongs to the IQD family. In terms of assembly, binds to multiple calmodulin (CaM) in the presence of Ca(2+) and CaM-like proteins.

It is found in the nucleus envelope. The protein localises to the cytoplasm. The protein resides in the cytoskeleton. Its function is as follows. May be involved in cooperative interactions with calmodulins or calmodulin-like proteins. Recruits calmodulin proteins to microtubules, thus being a potential scaffold in cellular signaling and trafficking. May associate with nucleic acids and regulate gene expression at the transcriptional or post-transcriptional level. This Arabidopsis thaliana (Mouse-ear cress) protein is Protein IQ-DOMAIN 30.